Consider the following 2245-residue polypeptide: Basic helix-loop-helix domain-containing protein USF3 (2245 aa).

The interval 1-28 is disordered; the sequence is MPEMTENETPTKKQHRKKNRETHNAVER. Residues 18 to 69 form the bHLH domain; sequence KNRETHNAVERHRKKKINAGINRIGELIPCSPALKQSKNMILDQAFKYITEL. The stretch at 77 to 112 forms a coiled coil; that stretch reads LLNGGNNEQAEEIKKLRKQLEEIQKENGRYIELLKA. Disordered regions lie at residues 271-290, 447-470, 881-900, 906-933, 1015-1041, 1164-1238, 1307-1331, 1460-1624, 1636-1664, 1736-1764, 1777-1815, 1834-1859, and 1891-2031; these read LHTC…QENP, SQTP…TSNH, SKSK…VTSE, AAKS…ALSD, KNPQ…IVDS, PSEA…SITS, IPNS…AKRA, IKQQ…VSGH, LEQQ…ERNR, TFKP…GNPV, ISQN…ENTC, GSQR…YNCP, and STLN…QPAT. Over residues 273-288 the composition is skewed to polar residues; sequence TCLNDQNSSENKNGQE. Positions 881–896 are enriched in low complexity; it reads SKSKSAEKSSPPSQES. Polar residues predominate over residues 912 to 925; that stretch reads STPNLQQETSQDKP. Composition is skewed to polar residues over residues 1185 to 1202 and 1219 to 1238; these read GTGQ…QGSI and IKTS…SITS. Over residues 1319 to 1331 the composition is skewed to basic and acidic residues; sequence PSHESRKDSAKRA. Over residues 1462-1478 the composition is skewed to low complexity; the sequence is QQQQQQQQQQQQQQQQQ. Composition is skewed to polar residues over residues 1501–1520 and 1528–1538; these read SVHS…QEVQ and VQGTQTSQLSL. Residues 1560 to 1569 show a composition bias toward low complexity; the sequence is QQMQQQMQQH. The segment covering 1570-1585 has biased composition (polar residues); sequence FGSSQTEKSCENPSTS. A compositionally biased stretch (low complexity) spans 1593–1624; the sequence is QNHLNQDIMHQQQDVGSRQQGSGVSSEHVSGH. Polar residues predominate over residues 1636-1654; it reads LEQQMVSQPSIVTRSSDMT. Polar residues-rich tracts occupy residues 1904 to 1923 and 1998 to 2007; these read GDIQ…SNPM and SGNQRQSTVF.

It localises to the nucleus. Functionally, involved in the negative regulation of epithelial-mesenchymal transition, the process by which epithelial cells lose their polarity and adhesion properties to become mesenchymal cells with enhanced migration and invasive properties. This Homo sapiens (Human) protein is Basic helix-loop-helix domain-containing protein USF3.